Reading from the N-terminus, the 156-residue chain is Small ribosomal subunit protein uS7 (156 aa).

This sequence belongs to the universal ribosomal protein uS7 family. As to quaternary structure, part of the 30S ribosomal subunit. Contacts proteins S9 and S11.

One of the primary rRNA binding proteins, it binds directly to 16S rRNA where it nucleates assembly of the head domain of the 30S subunit. Is located at the subunit interface close to the decoding center, probably blocks exit of the E-site tRNA. The chain is Small ribosomal subunit protein uS7 from Campylobacter jejuni subsp. jejuni serotype O:6 (strain 81116 / NCTC 11828).